A 498-amino-acid chain; its full sequence is ATP synthase subunit beta, chloroplastic (498 aa).

An ATP-binding site is contributed by 172-179; it reads GGAGVGKT.

The protein belongs to the ATPase alpha/beta chains family. F-type ATPases have 2 components, CF(1) - the catalytic core - and CF(0) - the membrane proton channel. CF(1) has five subunits: alpha(3), beta(3), gamma(1), delta(1), epsilon(1). CF(0) has four main subunits: a(1), b(1), b'(1) and c(9-12).

It is found in the plastid. The protein localises to the chloroplast thylakoid membrane. It carries out the reaction ATP + H2O + 4 H(+)(in) = ADP + phosphate + 5 H(+)(out). Produces ATP from ADP in the presence of a proton gradient across the membrane. The catalytic sites are hosted primarily by the beta subunits. This Aspidistra elatior (Cast-iron plant) protein is ATP synthase subunit beta, chloroplastic.